The primary structure comprises 197 residues: CASP-like protein 1B2 (197 aa).

The residue at position 2 (A2) is an N-acetylalanine. Residues A2 to K17 are Cytoplasmic-facing. A helical membrane pass occupies residues L18–S38. Over L39–A69 the chain is Extracellular. The helical transmembrane segment at F70 to V90 threads the bilayer. Residues Q91 to S106 lie on the Cytoplasmic side of the membrane. A helical transmembrane segment spans residues I107–F127. The Extracellular portion of the chain corresponds to V128–A156. Residues G157–I177 form a helical membrane-spanning segment. Topologically, residues S178–V197 are cytoplasmic.

The protein belongs to the Casparian strip membrane proteins (CASP) family. In terms of assembly, homodimer and heterodimers.

It is found in the cell membrane. This chain is CASP-like protein 1B2, found in Arabidopsis thaliana (Mouse-ear cress).